The following is a 652-amino-acid chain: tRNA 5-methylaminomethyl-2-thiouridine biosynthesis bifunctional protein MnmC (652 aa).

A tRNA (mnm(5)s(2)U34)-methyltransferase region spans residues 1-235 (MPDRLVPATL…EPALRVGEYA (235 aa)). Residues 259–652 (IGAGLAGCAV…IRALRGRQIG (394 aa)) are FAD-dependent cmnm(5)s(2)U34 oxidoreductase.

The protein in the N-terminal section; belongs to the methyltransferase superfamily. tRNA (mnm(5)s(2)U34)-methyltransferase family. In the C-terminal section; belongs to the DAO family. The cofactor is FAD.

The protein resides in the cytoplasm. The enzyme catalyses 5-aminomethyl-2-thiouridine(34) in tRNA + S-adenosyl-L-methionine = 5-methylaminomethyl-2-thiouridine(34) in tRNA + S-adenosyl-L-homocysteine + H(+). Its function is as follows. Catalyzes the last two steps in the biosynthesis of 5-methylaminomethyl-2-thiouridine (mnm(5)s(2)U) at the wobble position (U34) in tRNA. Catalyzes the FAD-dependent demodification of cmnm(5)s(2)U34 to nm(5)s(2)U34, followed by the transfer of a methyl group from S-adenosyl-L-methionine to nm(5)s(2)U34, to form mnm(5)s(2)U34. This Burkholderia ambifaria (strain MC40-6) protein is tRNA 5-methylaminomethyl-2-thiouridine biosynthesis bifunctional protein MnmC.